Reading from the N-terminus, the 238-residue chain is MFTGIVECMGTVLENNPYDDSESGGQGVSITIGNAGSILTDCHVGDSIAVNGVCLTVTEFNNDSFKVGISPETIKRSNVASWIQGTQVNLERAVSQDVRFGGHYVQGHVDTVANIVSRRPEGNSIIFGFQLRDQEYFKYIVEKGFICIDGTSLTIIKVDPLSQGGAFYISMIKHTQDNVIMPLKKIGDEVNIEVDLTGKIIEKQILLTLENQISKKDSTLNTMISNIIEEKVRNYLNK.

Lumazine-binding repeat units lie at residues 1–103 (MFTG…FGGH) and 104–205 (YVQG…EKQI). Residues 4 to 6 (GIV), 54 to 56 (CLT), and 68 to 73 (GISPET) contribute to the 2,4-dihydroxypteridine site. Ser95 bears the Phosphoserine mark. Residues 107 to 109 (GHV), Lys143, 152 to 154 (SLT), and 170 to 175 (SMIKHT) each bind 2,4-dihydroxypteridine.

In terms of assembly, homotrimer.

It carries out the reaction 2 6,7-dimethyl-8-(1-D-ribityl)lumazine + H(+) = 5-amino-6-(D-ribitylamino)uracil + riboflavin. It participates in cofactor biosynthesis; riboflavin biosynthesis; riboflavin from 2-hydroxy-3-oxobutyl phosphate and 5-amino-6-(D-ribitylamino)uracil: step 2/2. In terms of biological role, catalyzes the dismutation of two molecules of 6,7-dimethyl-8-ribityllumazine, resulting in the formation of riboflavin and 5-amino-6-(D-ribitylamino)uracil. The sequence is that of Riboflavin synthase from Saccharomyces cerevisiae (strain ATCC 204508 / S288c) (Baker's yeast).